The primary structure comprises 467 residues: Tyrosine phenol-lyase (467 aa).

Residue Lys-268 is modified to N6-(pyridoxal phosphate)lysine.

The protein belongs to the beta-eliminating lyase family. Homotetramer. It depends on pyridoxal 5'-phosphate as a cofactor.

It carries out the reaction L-tyrosine + H2O = phenol + pyruvate + NH4(+). The polypeptide is Tyrosine phenol-lyase (Nostoc punctiforme (strain ATCC 29133 / PCC 73102)).